A 308-amino-acid polypeptide reads, in one-letter code: Probable dimethyladenosine transferase (308 aa).

Over residues 1–11 the composition is skewed to basic residues; sequence MGKTSKVKKTK. The segment at 1 to 24 is disordered; the sequence is MGKTSKVKKTKAGSSTGNVQSLPF. A compositionally biased stretch (polar residues) spans 12 to 24; that stretch reads AGSSTGNVQSLPF. S-adenosyl-L-methionine-binding residues include H31, L33, G58, E79, D107, and N122.

It belongs to the class I-like SAM-binding methyltransferase superfamily. rRNA adenine N(6)-methyltransferase family. As to quaternary structure, part of the small subunit (SSU) processome, composed of more than 70 proteins and the RNA chaperone small nucleolar RNA (snoRNA) U3.

The protein localises to the nucleus. It is found in the nucleolus. The enzyme catalyses adenosine(1779)/adenosine(1780) in 18S rRNA + 4 S-adenosyl-L-methionine = N(6)-dimethyladenosine(1779)/N(6)-dimethyladenosine(1780) in 18S rRNA + 4 S-adenosyl-L-homocysteine + 4 H(+). Functionally, specifically dimethylates two adjacent adenosines in the loop of a conserved hairpin near the 3'-end of 18S rRNA in the 40S particle. Involved in the pre-rRNA processing steps leading to small-subunit rRNA production independently of its RNA-modifying catalytic activity. Part of the small subunit (SSU) processome, first precursor of the small eukaryotic ribosomal subunit. During the assembly of the SSU processome in the nucleolus, many ribosome biogenesis factors, an RNA chaperone and ribosomal proteins associate with the nascent pre-rRNA and work in concert to generate RNA folding, modifications, rearrangements and cleavage as well as targeted degradation of pre-ribosomal RNA by the RNA exosome. The polypeptide is Probable dimethyladenosine transferase (Caenorhabditis elegans).